A 131-amino-acid polypeptide reads, in one-letter code: Small ribosomal subunit protein uS8 (131 aa).

It belongs to the universal ribosomal protein uS8 family. Part of the 30S ribosomal subunit. Contacts proteins S5 and S12.

In terms of biological role, one of the primary rRNA binding proteins, it binds directly to 16S rRNA central domain where it helps coordinate assembly of the platform of the 30S subunit. This chain is Small ribosomal subunit protein uS8, found in Ralstonia pickettii (strain 12J).